The sequence spans 942 residues: Sucrose synthase 6 (942 aa).

Residues 281-759 (TVFNVVIFSV…GLKRIYECYT (479 aa)) form a GT-B glycosyltransferase region. Residues 830-862 (TTNLGAGSKQKEVTETEKTKQKSKDGQEQHDVK) form a disordered region. Basic and acidic residues predominate over residues 838-862 (KQKEVTETEKTKQKSKDGQEQHDVK).

It belongs to the glycosyltransferase 1 family. Plant sucrose synthase subfamily. In terms of tissue distribution, detected in the whole plant but more precisely confined to the vasculature in cotyledons, leaves, petals, anthers and roots.

The protein resides in the secreted. It is found in the cell wall. It carries out the reaction an NDP-alpha-D-glucose + D-fructose = a ribonucleoside 5'-diphosphate + sucrose + H(+). Its function is as follows. Sucrose-cleaving enzyme that provides UDP-glucose and fructose for various metabolic pathways. Functions in callose synthesis at the site of phloem sieve elements. The sequence is that of Sucrose synthase 6 (SUS6) from Arabidopsis thaliana (Mouse-ear cress).